We begin with the raw amino-acid sequence, 175 residues long: ADP-ribosylation factor 6 (175 aa).

Glycine 2 is lipidated: N-myristoyl glycine. Lysine 3 is lipidated: N6-myristoyl lysine. Residues 23–28 (AAGKTT), 41–44 (TIPT), 63–67 (DVGGQ), 122–125 (NKQD), and 155–156 (CA) each bind GTP.

This sequence belongs to the small GTPase superfamily. Arf family.

The protein localises to the cytoplasm. It localises to the cytosol. It is found in the cell membrane. The protein resides in the endosome membrane. Its subcellular location is the recycling endosome membrane. The protein localises to the cell projection. It localises to the filopodium membrane. It is found in the ruffle. The protein resides in the cleavage furrow. Its subcellular location is the midbody. The protein localises to the midbody ring. It localises to the golgi apparatus. The enzyme catalyses GTP + H2O = GDP + phosphate + H(+). Functionally, GTP-binding protein involved in protein trafficking; regulates endocytic recycling and cytoskeleton remodeling. May modulate vesicle budding and uncoating within the Golgi apparatus. May contribute to the regulation of dendritic branching, filopodia extension and dendritic spine development. The protein is ADP-ribosylation factor 6 (arf6) of Xenopus laevis (African clawed frog).